A 388-amino-acid chain; its full sequence is MFPRFRELYYITHIDNVPSILEKGILSHAEIERQSINCKKVYDNSIVLKRKSRLLADNRSLWEFANLYFQPRNPMLYRLLVQGLKPKDLAIVAVKWTIMKRDDILITDGNAASSETQIYRKSEIKNIKNIISVKDMEYWREEDGSKRKIMAECLVPQCVDPRYISAIYVSDHEVASNLKKAINNRNIPVIPDPTFFFLPNREIKLTQNLSLVEGDMFFSRMQTLTVSVNTVGVMGKGLASRVKYQFPDVYVVFQDACKKKELEFGKPYLYKRESSLDAFLAEDGEKLSDLNHQTWFLLFPTKRHWKNMSEIKGIESGLRWIVENYKKEGIKSLAVPALGCGLGGLEWSIVGPLMCRYLTKLEIPVQIYLPLEKRIPDVQLSPKFLLDS.

Residues 6–197 enclose the DarT domain; sequence RELYYITHID…PVIPDPTFFF (192 aa). NAD(+)-binding positions include 10–12 and arginine 50; that span reads YIT. The interval 34 to 52 is NAD(+)-binding element; sequence QSINCKKVYDNSIVLKRKS. Arginine 50 functions as the Proton acceptor in the catalytic mechanism. The ADP-ribosylating turn-turn loop stretch occupies residues 107–152; sequence TDGNAASSETQIYRKSEIKNIKNIISVKDMEYWREEDGSKRKIMAE. Glutamate 152 is an active-site residue. One can recognise a Macro domain in the interval 196-376; sequence FFLPNREIKL…IYLPLEKRIP (181 aa). ADP-D-ribose is bound by residues 215–216, 227–229, threonine 301, 339–343, and 371–372; these read DM, SVN, GCGLG, and LE.

The protein in the N-terminal section; belongs to the DarT ADP-ribosyltransferase family. In the C-terminal section; belongs to the DarG ADP-ribosyl glycohydrolase family.

It catalyses the reaction an N-(ADP-alpha-D-ribosyl)-thymidine in DNA + H2O = a thymidine in DNA + ADP-D-ribose. The enzyme catalyses a thymidine in DNA + NAD(+) = an N-(ADP-alpha-D-ribosyl)-thymidine in DNA + nicotinamide + H(+). Its function is as follows. A fusion protein of the toxic and antitoxin components of a hybrid type II/IV toxin-antitoxin (TA) system. The N-terminal domain ADP-ribosylates ssDNA on a thymidine residue, while the C-terminal domain removes the modification, neutralizing the toxic effect. This chain is DNA ADP-ribosyl transferase-DNA ADP-ribosyl glycohydrolase fusion protein, found in Thermosipho africanus (strain H17ap60334).